A 163-amino-acid chain; its full sequence is Extracellular giant hemoglobin major globin subunit B2 (163 aa).

A signal peptide spans 1–16 (MIALFVLMGLMAAASA). Positions 19–163 (CCSSEDRANV…RIANGISAGL (145 aa)) constitute a Globin domain. Cysteine 20 and cysteine 151 form a disulfide bridge. Hydrogen sulfide is bound at residue cysteine 83. Histidine 114 serves as a coordination point for heme b.

Belongs to the globin family. In terms of assembly, the 400 kDa hemoglobin consists of a spherical 24-mer arranged as a double layer of dome-shaped dodecamers. Each dodecamer is composed of the 3-fold trimer of the tetramer A1-A2-B1-B2 having one intra-tetramer (A1-B2) disulfide bond and one inter-tetramer (B1-B2) disulfide bond per tetramer.

The protein localises to the secreted. The extracellular giant hemoglobin is able to bind and transport oxygen and hydrosulfide simultaneously and reversibly at two different sites. This Oligobrachia mashikoi (Beard worm) protein is Extracellular giant hemoglobin major globin subunit B2 (ghbB2).